The following is a 402-amino-acid chain: TBC1 domain family member 20 (402 aa).

Residues 1 to 27 form a disordered region; that stretch reads MALRPSKGDGSAGRWDRGAGKADFNAK. Positions 14 to 26 are enriched in basic and acidic residues; sequence RWDRGAGKADFNA. Residues 59 to 245 form the Rab-GAP TBC domain; the sequence is LLTDEIRCQV…RLYDFFLACH (187 aa). The next 2 membrane-spanning stretches (helical) occupy residues 237–257 and 366–386; these read LYDF…AVIV and FVKL…LAVV.

The protein resides in the membrane. GTPase-activating protein specific for Rab1 and Rab2 small GTPase families for which it can accelerate the intrinsic GTP hydrolysis rate by more than five orders of magnitude. Also shows GAP activity for RAB18 GTPase. Promotes RAB18 dissociation from the endoplasmic reticulum (ER) membrane into the cytosol, probably through stimulating RAB18 GTP-hydrolysis. Involved in maintaining endoplasmic reticulum structure. In Mus musculus (Mouse), this protein is TBC1 domain family member 20.